Consider the following 500-residue polypeptide: Histidine--tRNA ligase (500 aa).

The protein belongs to the class-II aminoacyl-tRNA synthetase family. In terms of assembly, homodimer.

It localises to the cytoplasm. The catalysed reaction is tRNA(His) + L-histidine + ATP = L-histidyl-tRNA(His) + AMP + diphosphate + H(+). This chain is Histidine--tRNA ligase (hisS), found in Mesorhizobium japonicum (strain LMG 29417 / CECT 9101 / MAFF 303099) (Mesorhizobium loti (strain MAFF 303099)).